We begin with the raw amino-acid sequence, 350 residues long: B1 bradykinin receptor (350 aa).

Residues 1–41 (MASRAPLELLPLNRSQLSPPNATTCDDAPEAWDLLHRVLPS) are Extracellular-facing. N-linked (GlcNAc...) asparagine glycans are attached at residues asparagine 13 and asparagine 21. A helical transmembrane segment spans residues 42 to 62 (VIIIICVCGLLGNLLVLAVLL). Topologically, residues 63 to 72 (RPRRRLNVAE) are cytoplasmic. A helical membrane pass occupies residues 73–93 (MYLANLAASDLVFVLGLPFWA). Residues 94–110 (ANISNQFRWPFGGLLCR) are Extracellular-facing. Asparagine 95 carries an N-linked (GlcNAc...) asparagine glycan. An intrachain disulfide couples cysteine 109 to cysteine 186. The helical transmembrane segment at 111–131 (LVNGVIKANLFISIFLVVAIS) threads the bilayer. The Cytoplasmic segment spans residues 132–150 (RDRYRALVHPMATRRRRQA). The chain crosses the membrane as a helical span at residues 151 to 171 (RATCVLIWVAGSLLSVPTFLF). Residues 172–204 (RSIEAVPELNNDSACVLLHPPGAWHVARMVELN) lie on the Extracellular side of the membrane. Asparagine 182 carries an N-linked (GlcNAc...) asparagine glycan. The chain crosses the membrane as a helical span at residues 205-225 (VLGFLLPLAAIVFFNCHILAS). Residues 226-248 (LRGRPEVRGARCGGPPDGRTTAL) lie on the Cytoplasmic side of the membrane. The chain crosses the membrane as a helical span at residues 249-269 (ILTFVAAFLVCWTPYHFFAFL). Residues 270–292 (EFLTQVQVVRGCFWENFKDLGLQ) are Extracellular-facing. The helical transmembrane segment at 293 to 313 (YASFFAFINSCLNPVIYVFVG) threads the bilayer. The Cytoplasmic segment spans residues 314 to 350 (RLFRTRVWDLFKQCAPRRPPAVSWSHRKRVLQLFWQN). The S-palmitoyl cysteine moiety is linked to residue cysteine 327.

The protein belongs to the G-protein coupled receptor 1 family. Bradykinin receptor subfamily. BDKRB1 sub-subfamily.

It is found in the cell membrane. This is a receptor for bradykinin. Could be a factor in chronic pain and inflammation. This Canis lupus familiaris (Dog) protein is B1 bradykinin receptor (BDKRB1).